Reading from the N-terminus, the 273-residue chain is Large ribosomal subunit protein uL2 (273 aa).

The interval 213-261 is disordered; sequence WLGKRPQSRGVAMNPVDHPHGGGEGKSSGGRHPVTPWGVPTKGYKTRVN.

It belongs to the universal ribosomal protein uL2 family. In terms of assembly, part of the 50S ribosomal subunit. Forms a bridge to the 30S subunit in the 70S ribosome.

Its function is as follows. One of the primary rRNA binding proteins. Required for association of the 30S and 50S subunits to form the 70S ribosome, for tRNA binding and peptide bond formation. It has been suggested to have peptidyltransferase activity; this is somewhat controversial. Makes several contacts with the 16S rRNA in the 70S ribosome. This chain is Large ribosomal subunit protein uL2, found in Syntrophotalea carbinolica (strain DSM 2380 / NBRC 103641 / GraBd1) (Pelobacter carbinolicus).